The primary structure comprises 476 residues: Exodeoxyribonuclease 7 large subunit (476 aa).

Belongs to the XseA family. Heterooligomer composed of large and small subunits.

It is found in the cytoplasm. The enzyme catalyses Exonucleolytic cleavage in either 5'- to 3'- or 3'- to 5'-direction to yield nucleoside 5'-phosphates.. Its function is as follows. Bidirectionally degrades single-stranded DNA into large acid-insoluble oligonucleotides, which are then degraded further into small acid-soluble oligonucleotides. The polypeptide is Exodeoxyribonuclease 7 large subunit (Bartonella bacilliformis (strain ATCC 35685 / KC583 / Herrer 020/F12,63)).